Here is a 170-residue protein sequence, read N- to C-terminus: NADH-ubiquinone oxidoreductase chain 6 (170 aa).

Helical transmembrane passes span 1–21 (MIYM…AVAS), 26–46 (FYAA…IVSF), 49–69 (SFLS…VFAY), 86–106 (VVFY…FLGG), and 138–158 (WVII…GIWV).

It belongs to the complex I subunit 6 family. As to quaternary structure, core subunit of respiratory chain NADH dehydrogenase (Complex I) which is composed of 45 different subunits.

The protein localises to the mitochondrion inner membrane. The enzyme catalyses a ubiquinone + NADH + 5 H(+)(in) = a ubiquinol + NAD(+) + 4 H(+)(out). In terms of biological role, core subunit of the mitochondrial membrane respiratory chain NADH dehydrogenase (Complex I) which catalyzes electron transfer from NADH through the respiratory chain, using ubiquinone as an electron acceptor. Essential for the catalytic activity and assembly of complex I. This Xenopus laevis (African clawed frog) protein is NADH-ubiquinone oxidoreductase chain 6 (mt-nd6).